The primary structure comprises 575 residues: Phosphoenolpyruvate-protein phosphotransferase (575 aa).

At Y122 the chain carries Phosphotyrosine. The active-site Tele-phosphohistidine intermediate is H189. The phosphoenolpyruvate site is built by R296 and R332. The Mg(2+) site is built by E431 and D455. Residues 454-455 (ND) and R465 contribute to the phosphoenolpyruvate site. The Proton donor role is filled by C502.

Belongs to the PEP-utilizing enzyme family. As to quaternary structure, homodimer. Interacts with the pole-localizer protein TmaR. Binding to TmaR is reversible as long as TmaR can get phosphorylated, whereas binding to non-phosphorylated TmaR is very strong and shifts the equilibrium toward binding. The cofactor is Mg(2+). In terms of processing, phosphorylated on Tyr-122. Phosphorylation on Tyr-122 is important for polar localization but not for interaction with TmaR and for activity.

Its subcellular location is the cytoplasm. The enzyme catalyses L-histidyl-[protein] + phosphoenolpyruvate = N(pros)-phospho-L-histidyl-[protein] + pyruvate. Inhibited by oxalate. Its function is as follows. General (non sugar-specific) component of the phosphoenolpyruvate-dependent sugar phosphotransferase system (sugar PTS). This major carbohydrate active-transport system catalyzes the phosphorylation of incoming sugar substrates concomitantly with their translocation across the cell membrane. Enzyme I transfers the phosphoryl group from phosphoenolpyruvate (PEP) to the phosphoryl carrier protein (HPr). Can also use (Z)-3-fluoro-PEP (ZFPEP), (Z)-3-methyl-PEP (ZMePEP), (Z)-3-chloro-PEP (ZClPEP) and (E)-3-chloro-PEP (EClPEP) as alternative phosphoryl donors. In Escherichia coli (strain K12), this protein is Phosphoenolpyruvate-protein phosphotransferase.